The primary structure comprises 445 residues: Potassium/proton antiporter CemA (445 aa).

Transmembrane regions (helical) follow at residues 44-64, 330-350, 368-388, and 405-425; these read MQVS…VNIC, ALTC…ILIL, LIII…GWKL, and FILC…KYWI.

This sequence belongs to the CemA family.

It localises to the plastid. The protein localises to the chloroplast inner membrane. The catalysed reaction is K(+)(in) + H(+)(out) = K(+)(out) + H(+)(in). In terms of biological role, contributes to K(+)/H(+) antiport activity by supporting proton efflux to control proton extrusion and homeostasis in chloroplasts in a light-dependent manner to modulate photosynthesis. Prevents excessive induction of non-photochemical quenching (NPQ) under continuous-light conditions. Indirectly promotes efficient inorganic carbon uptake into chloroplasts. This is Potassium/proton antiporter CemA from Pleurastrum terricola (Filamentous green alga).